The chain runs to 187 residues: Orotate phosphoribosyltransferase (187 aa).

110–118 is a binding site for 5-phospho-alpha-D-ribose 1-diphosphate; that stretch reads EDVVTTGGS. Residues threonine 114 and arginine 142 each coordinate orotate.

It belongs to the purine/pyrimidine phosphoribosyltransferase family. PyrE subfamily. As to quaternary structure, homodimer. Mg(2+) serves as cofactor.

The catalysed reaction is orotidine 5'-phosphate + diphosphate = orotate + 5-phospho-alpha-D-ribose 1-diphosphate. Its pathway is pyrimidine metabolism; UMP biosynthesis via de novo pathway; UMP from orotate: step 1/2. Its function is as follows. Catalyzes the transfer of a ribosyl phosphate group from 5-phosphoribose 1-diphosphate to orotate, leading to the formation of orotidine monophosphate (OMP). In Thermotoga neapolitana (strain ATCC 49049 / DSM 4359 / NBRC 107923 / NS-E), this protein is Orotate phosphoribosyltransferase.